Here is a 476-residue protein sequence, read N- to C-terminus: Bifunctional protein HldE (476 aa).

The tract at residues 1–318 is ribokinase; that stretch reads MKPILPDYNN…AEAIHGSRDT (318 aa). Residue 195–198 coordinates ATP; that stretch reads NMSE. Aspartate 264 is a catalytic residue. The cytidylyltransferase stretch occupies residues 344–476; sequence MTNGCFDILH…IIDAIKGGRG (133 aa).

In the N-terminal section; belongs to the carbohydrate kinase PfkB family. It in the C-terminal section; belongs to the cytidylyltransferase family. Homodimer.

The catalysed reaction is D-glycero-beta-D-manno-heptose 7-phosphate + ATP = D-glycero-beta-D-manno-heptose 1,7-bisphosphate + ADP + H(+). It catalyses the reaction D-glycero-beta-D-manno-heptose 1-phosphate + ATP + H(+) = ADP-D-glycero-beta-D-manno-heptose + diphosphate. It functions in the pathway nucleotide-sugar biosynthesis; ADP-L-glycero-beta-D-manno-heptose biosynthesis; ADP-L-glycero-beta-D-manno-heptose from D-glycero-beta-D-manno-heptose 7-phosphate: step 1/4. It participates in nucleotide-sugar biosynthesis; ADP-L-glycero-beta-D-manno-heptose biosynthesis; ADP-L-glycero-beta-D-manno-heptose from D-glycero-beta-D-manno-heptose 7-phosphate: step 3/4. The protein operates within bacterial outer membrane biogenesis; LPS core biosynthesis. Functionally, catalyzes the phosphorylation of D-glycero-D-manno-heptose 7-phosphate at the C-1 position to selectively form D-glycero-beta-D-manno-heptose-1,7-bisphosphate. Catalyzes the ADP transfer from ATP to D-glycero-beta-D-manno-heptose 1-phosphate, yielding ADP-D-glycero-beta-D-manno-heptose. The sequence is that of Bifunctional protein HldE from Vibrio vulnificus (strain CMCP6).